Here is a 218-residue protein sequence, read N- to C-terminus: Probable GTP-binding protein EngB (218 aa).

The 175-residue stretch at valine 31–proline 205 folds into the EngB-type G domain. Residues glycine 39–serine 46, glycine 66–leucine 70, aspartate 84–glycine 87, threonine 151–aspartate 154, and phenylalanine 184–serine 186 each bind GTP. 2 residues coordinate Mg(2+): serine 46 and threonine 68.

Belongs to the TRAFAC class TrmE-Era-EngA-EngB-Septin-like GTPase superfamily. EngB GTPase family. Mg(2+) serves as cofactor.

In terms of biological role, necessary for normal cell division and for the maintenance of normal septation. In Shewanella loihica (strain ATCC BAA-1088 / PV-4), this protein is Probable GTP-binding protein EngB.